The following is a 116-amino-acid chain: Tyrosine-protein phosphatase 14 (116 aa).

Residues 1 to 116 (WRMITQEKAQ…SLKNPGPVIV (116 aa)) form the Tyrosine-protein phosphatase domain. D84 contributes to the substrate binding site.

The protein belongs to the protein-tyrosine phosphatase family.

It catalyses the reaction O-phospho-L-tyrosyl-[protein] + H2O = L-tyrosyl-[protein] + phosphate. This chain is Tyrosine-protein phosphatase 14 (STY-14), found in Styela plicata (Wrinkled sea squirt).